Reading from the N-terminus, the 342-residue chain is Tetraacyldisaccharide 4'-kinase (342 aa).

Position 68–75 (68–75 (TVGGTGKT)) interacts with ATP.

This sequence belongs to the LpxK family.

The catalysed reaction is a lipid A disaccharide + ATP = a lipid IVA + ADP + H(+). The protein operates within glycolipid biosynthesis; lipid IV(A) biosynthesis; lipid IV(A) from (3R)-3-hydroxytetradecanoyl-[acyl-carrier-protein] and UDP-N-acetyl-alpha-D-glucosamine: step 6/6. In terms of biological role, transfers the gamma-phosphate of ATP to the 4'-position of a tetraacyldisaccharide 1-phosphate intermediate (termed DS-1-P) to form tetraacyldisaccharide 1,4'-bis-phosphate (lipid IVA). The chain is Tetraacyldisaccharide 4'-kinase from Burkholderia thailandensis (strain ATCC 700388 / DSM 13276 / CCUG 48851 / CIP 106301 / E264).